The following is a 123-amino-acid chain: Large ribosomal subunit protein bL12 (123 aa).

Belongs to the bacterial ribosomal protein bL12 family. In terms of assembly, homodimer. Part of the ribosomal stalk of the 50S ribosomal subunit. Forms a multimeric L10(L12)X complex, where L10 forms an elongated spine to which 2 to 4 L12 dimers bind in a sequential fashion. Binds GTP-bound translation factors.

Forms part of the ribosomal stalk which helps the ribosome interact with GTP-bound translation factors. Is thus essential for accurate translation. The polypeptide is Large ribosomal subunit protein bL12 (Geobacillus thermodenitrificans (strain NG80-2)).